The following is an 88-amino-acid chain: RNA-binding protein Hfq (88 aa).

The Sm domain occupies 10–70 (DRFLNILRTK…ISTILPAEYI (61 aa)).

This sequence belongs to the Hfq family. Homohexamer.

RNA chaperone that binds small regulatory RNA (sRNAs) and mRNAs to facilitate mRNA translational regulation in response to envelope stress, environmental stress and changes in metabolite concentrations. Also binds with high specificity to tRNAs. The polypeptide is RNA-binding protein Hfq (Fervidobacterium nodosum (strain ATCC 35602 / DSM 5306 / Rt17-B1)).